Consider the following 248-residue polypeptide: ATP synthase delta chain, chloroplastic (248 aa).

A chloroplast-targeting transit peptide spans 1–60; sequence MAALQQTPITFQSRSPPPTQIISGPTAKLSFSGGLKLPKLTIKLRSNRTSRRGGGAAGSK.

It belongs to the ATPase delta chain family. F-type ATPases have 2 components, CF(1) - the catalytic core - and CF(0) - the membrane proton channel. CF(1) has five subunits: alpha(3), beta(3), gamma(1), delta(1), epsilon(1). CF(0) has three main subunits: a, b and c.

The protein resides in the plastid. It is found in the chloroplast thylakoid membrane. Functionally, this protein seems to be part of the stalk that links CF(0) to CF(1). It either transmits conformational changes from CF(0) into CF(1) or is implicated in proton conduction. This is ATP synthase delta chain, chloroplastic (ATPD) from Nicotiana tabacum (Common tobacco).